The chain runs to 392 residues: DNA replication and repair protein RecF (392 aa).

30 to 37 (GPNAAGKT) contacts ATP.

Belongs to the RecF family.

The protein localises to the cytoplasm. The RecF protein is involved in DNA metabolism; it is required for DNA replication and normal SOS inducibility. RecF binds preferentially to single-stranded, linear DNA. It also seems to bind ATP. In Chloroflexus aggregans (strain MD-66 / DSM 9485), this protein is DNA replication and repair protein RecF.